The primary structure comprises 130 residues: Ribosome-binding factor A (130 aa).

It belongs to the RbfA family. In terms of assembly, monomer. Binds 30S ribosomal subunits, but not 50S ribosomal subunits or 70S ribosomes.

It localises to the cytoplasm. In terms of biological role, one of several proteins that assist in the late maturation steps of the functional core of the 30S ribosomal subunit. Associates with free 30S ribosomal subunits (but not with 30S subunits that are part of 70S ribosomes or polysomes). Required for efficient processing of 16S rRNA. May interact with the 5'-terminal helix region of 16S rRNA. This Lachnospira eligens (strain ATCC 27750 / DSM 3376 / VPI C15-48 / C15-B4) (Eubacterium eligens) protein is Ribosome-binding factor A.